The chain runs to 325 residues: GTP 3',8-cyclase (325 aa).

One can recognise a Radical SAM core domain in the interval 10-229 (GYGRRINYLR…PSLEKIKSED (220 aa)). GTP is bound at residue arginine 19. [4Fe-4S] cluster contacts are provided by cysteine 26 and cysteine 30. Tyrosine 32 serves as a coordination point for S-adenosyl-L-methionine. Cysteine 33 is a [4Fe-4S] cluster binding site. Arginine 69 provides a ligand contact to GTP. Residue glycine 73 coordinates S-adenosyl-L-methionine. A GTP-binding site is contributed by threonine 100. Residue serine 124 coordinates S-adenosyl-L-methionine. Lysine 161 is a binding site for GTP. Methionine 195 provides a ligand contact to S-adenosyl-L-methionine. Residues cysteine 257 and cysteine 260 each contribute to the [4Fe-4S] cluster site. GTP is bound at residue 262–264 (RLR). Cysteine 274 provides a ligand contact to [4Fe-4S] cluster.

The protein belongs to the radical SAM superfamily. MoaA family. In terms of assembly, monomer and homodimer. [4Fe-4S] cluster serves as cofactor.

The catalysed reaction is GTP + AH2 + S-adenosyl-L-methionine = (8S)-3',8-cyclo-7,8-dihydroguanosine 5'-triphosphate + 5'-deoxyadenosine + L-methionine + A + H(+). The protein operates within cofactor biosynthesis; molybdopterin biosynthesis. Its function is as follows. Catalyzes the cyclization of GTP to (8S)-3',8-cyclo-7,8-dihydroguanosine 5'-triphosphate. The polypeptide is GTP 3',8-cyclase (Peptoclostridium acidaminophilum (Eubacterium acidaminophilum)).